The primary structure comprises 95 residues: Probable FAD-linked sulfhydryl oxidase OPG072 (95 aa).

At 1 to 8 the chain is on the intravirion side; it reads MNPKHWGR. Residues 1-95 enclose the ERV/ALR sulfhydryl oxidase domain; the sequence is MNPKHWGRAA…AIDVSKVKPL (95 aa). The chain crosses the membrane as a helical span at residues 9-25; sequence AAWTIIFIVLSQAGLDG. Over 26 to 95 the chain is Virion surface; sequence NIEACKRKLY…AIDVSKVKPL (70 aa). Cys43 and Cys46 are disulfide-bonded.

Belongs to the orthopoxvirus OPG072 family. As to quaternary structure, interacts with OPG128; this interaction involves formation of a transient disulfide-bonded intermediate, allowing disulfide bond transfer. FAD serves as cofactor.

Its subcellular location is the virion membrane. It localises to the host cytoplasm. It catalyses the reaction 2 R'C(R)SH + O2 = R'C(R)S-S(R)CR' + H2O2. FAD-dependent sulfhydryl oxidase that catalyzes disulfide bond formation. The complete pathway for formation of disulfide bonds in intracellular virion membrane proteins sequentially involves thiol-disulfide transfer between OPG072, OPG128 and OPG088. This Variola virus (isolate Human/India/Ind3/1967) (VARV) protein is Probable FAD-linked sulfhydryl oxidase OPG072 (OPG072).